A 464-amino-acid chain; its full sequence is MSTTALVEGKIVQCIGAVIDVEFPRDHMPKIYDALILEGSELTLEVQQQLGDGVVRTICLGASDGLRRGTTVKNTGKPISVPVGKPTLGRIMDVLGRPIDEAGPINSDVVRGIHQKAPAFDELSPSTELLETGIKVIDLICPFAKGGKVGLFGGAGVGKTVNMMELINNIAKEHGGYSVFAGVGERTREGNDFYHEMKDSNVLDKVALVYGQMNEPPGNRLRVALTGLTMAEHFRDEGLDVLFFVDNIYRFTLAGTEVSALLGRMPSAVGYQPTLAEEMGKLQERITSTKTGSITSVQAVYVPADDLTDPSPATTFGHLDATVVLSRDIASLGIYPAVDPLDSTSRQIDPNVIGEEHYSITRGVQQTLQRYKELRDIIAILGMDELAPEDKLAVARARKIQRFLSQPFHVAEVFTGSPGKYVPLKETIRGFKMIVEGECDHLPEQAFYMVGTIDEAFEKAKKIQ.

Position 153–160 (153–160 (GGAGVGKT)) interacts with ATP.

It belongs to the ATPase alpha/beta chains family. As to quaternary structure, F-type ATPases have 2 components, CF(1) - the catalytic core - and CF(0) - the membrane proton channel. CF(1) has five subunits: alpha(3), beta(3), gamma(1), delta(1), epsilon(1). CF(0) has three main subunits: a(1), b(2) and c(9-12). The alpha and beta chains form an alternating ring which encloses part of the gamma chain. CF(1) is attached to CF(0) by a central stalk formed by the gamma and epsilon chains, while a peripheral stalk is formed by the delta and b chains.

The protein localises to the cell inner membrane. The catalysed reaction is ATP + H2O + 4 H(+)(in) = ADP + phosphate + 5 H(+)(out). Produces ATP from ADP in the presence of a proton gradient across the membrane. The catalytic sites are hosted primarily by the beta subunits. The protein is ATP synthase subunit beta 2 of Paraburkholderia xenovorans (strain LB400).